Reading from the N-terminus, the 114-residue chain is Protein ELF4-LIKE 4 (114 aa).

A disordered region spans residues 87–114 (SVDASSEGESSGTLKSDGKANQKRFRSG). Over residues 89–100 (DASSEGESSGTL) the composition is skewed to polar residues.

Belongs to the EARLY FLOWERING 4 family. Homodimer.

The protein resides in the nucleus. Functionally, component of the central CCA1/LHY-TOC1 feedback loop in the circadian clock that promotes clock accuracy and is required for sustained rhythms in the absence of daily light/dark cycles. This is Protein ELF4-LIKE 4 (EFL4) from Arabidopsis thaliana (Mouse-ear cress).